A 143-amino-acid polypeptide reads, in one-letter code: Boletus edulis lectin (143 aa).

Beta-D-Gal-(1-&gt;3)-alpha-D-GalNAc-binding positions include Ala-30, 49–50 (SG), and 72–73 (HN). N-acetyl-alpha-D-galactosamine contacts are provided by residues 49–50 (SG) and 72–73 (HN). N,N'-diacetylchitobiose contacts are provided by residues 79-82 (DVVT), Arg-103, and Tyr-114. N-acetyl-alpha-D-glucosamine-binding positions include 79–82 (DVVT), Arg-103, and Tyr-114.

Belongs to the fungal fruit body lectin family. Homotetramer.

In terms of biological role, lectin that recognizes O-linked galactose-beta-1,3-N-acetylgalactosamine, a disaccharide (Thomsen-Friedenreich antigen or T-disaccharide), present on cell surface glycoproteins. Can also bind chitin, N,N'-diacetylchitobiose, N-acetylgalactosamine and N-acetylglucosamine. Inhibits proliferation of colon, breast and liver cancer cell lines (in vitro). The chain is Boletus edulis lectin from Boletus edulis (King bolete).